Reading from the N-terminus, the 186-residue chain is Ribosome-recycling factor (186 aa).

This sequence belongs to the RRF family.

It is found in the cytoplasm. Responsible for the release of ribosomes from messenger RNA at the termination of protein biosynthesis. May increase the efficiency of translation by recycling ribosomes from one round of translation to another. This is Ribosome-recycling factor from Chlorobium luteolum (strain DSM 273 / BCRC 81028 / 2530) (Pelodictyon luteolum).